A 104-amino-acid polypeptide reads, in one-letter code: N(4)-acetylcytidine amidohydrolase (104 aa).

In terms of domain architecture, ASCH spans 6 to 94; that stretch reads ITFFQRFQND…IAEIYPNQTQ (89 aa). The active-site Proton acceptor is lysine 21. Catalysis depends on threonine 24, which acts as the Nucleophile. The Proton donor role is filled by glutamate 74.

The protein belongs to the N(4)-acetylcytidine amidohydrolase family.

It catalyses the reaction N(4)-acetylcytidine + H2O = cytidine + acetate + H(+). It carries out the reaction N(4)-acetyl-2'-deoxycytidine + H2O = 2'-deoxycytidine + acetate + H(+). The enzyme catalyses N(4)-acetylcytosine + H2O = cytosine + acetate + H(+). Catalyzes the hydrolysis of N(4)-acetylcytidine (ac4C). The sequence is that of N(4)-acetylcytidine amidohydrolase (yqfB) from Salmonella dublin (strain CT_02021853).